Reading from the N-terminus, the 796-residue chain is Protein translocase subunit SecA 2 (796 aa).

ATP is bound by residues Gln84, 102–106, and Asp496; that span reads GEGKT.

This sequence belongs to the SecA family. Monomer and homodimer. Part of the essential Sec protein translocation apparatus which comprises SecA, SecYEG and auxiliary proteins SecDF. Other proteins may also be involved.

Its subcellular location is the cell membrane. It is found in the cytoplasm. The catalysed reaction is ATP + H2O + cellular proteinSide 1 = ADP + phosphate + cellular proteinSide 2.. Its function is as follows. Part of the Sec protein translocase complex. Interacts with the SecYEG preprotein conducting channel. Has a central role in coupling the hydrolysis of ATP to the transfer of proteins into and across the cell membrane, serving as an ATP-driven molecular motor driving the stepwise translocation of polypeptide chains across the membrane. The protein is Protein translocase subunit SecA 2 of Staphylococcus epidermidis (strain ATCC 12228 / FDA PCI 1200).